We begin with the raw amino-acid sequence, 147 residues long: Peroxynitrite isomerase (147 aa).

His137 contributes to the heme b binding site.

It belongs to the nitrobindin family. In terms of assembly, homodimer. Heme b serves as cofactor.

The catalysed reaction is peroxynitrite = nitrate. Its pathway is nitrogen metabolism. In terms of biological role, heme-binding protein able to scavenge peroxynitrite and to protect free L-tyrosine against peroxynitrite-mediated nitration, by acting as a peroxynitrite isomerase that converts peroxynitrite to nitrate. Therefore, this protein likely plays a role in peroxynitrite sensing and in the detoxification of reactive nitrogen and oxygen species (RNS and ROS, respectively). Is able to bind nitric oxide (NO) in vitro, but may act as a sensor of peroxynitrite levels in vivo. In Frankia alni (strain DSM 45986 / CECT 9034 / ACN14a), this protein is Peroxynitrite isomerase.